Here is a 196-residue protein sequence, read N- to C-terminus: Peptidyl-tRNA hydrolase (196 aa).

His15 is a binding site for tRNA. The Proton acceptor role is filled by His20. Tyr66, Asn68, and Asn114 together coordinate tRNA.

The protein belongs to the PTH family. Monomer.

It is found in the cytoplasm. It carries out the reaction an N-acyl-L-alpha-aminoacyl-tRNA + H2O = an N-acyl-L-amino acid + a tRNA + H(+). Hydrolyzes ribosome-free peptidyl-tRNAs (with 1 or more amino acids incorporated), which drop off the ribosome during protein synthesis, or as a result of ribosome stalling. Functionally, catalyzes the release of premature peptidyl moieties from peptidyl-tRNA molecules trapped in stalled 50S ribosomal subunits, and thus maintains levels of free tRNAs and 50S ribosomes. The polypeptide is Peptidyl-tRNA hydrolase (Polynucleobacter necessarius subsp. necessarius (strain STIR1)).